We begin with the raw amino-acid sequence, 545 residues long: Protein disulfide isomerase-like 1-3 (545 aa).

Pro residues predominate over residues 1–16 (MWPRAPATPPPPPWPS). Residues 1–24 (MWPRAPATPPPPPWPSKPSAASRS) are disordered. One can recognise a Thioredoxin 1 domain in the interval 55 to 189 (ASSTAFAAAF…IVAYLKRQAG (135 aa)). Asparagine 87 is a glycosylation site (N-linked (GlcNAc...) asparagine). Catalysis depends on nucleophile residues cysteine 107 and cysteine 110. An intrachain disulfide couples cysteine 107 to cysteine 110. Asparagine 349 carries N-linked (GlcNAc...) asparagine glycosylation. A Thioredoxin 2 domain is found at 403–545 (FTEGTLAPHV…TTTESVKDEL (143 aa)). Residues cysteine 453 and cysteine 456 each act as nucleophile in the active site. A disulfide bridge connects residues cysteine 453 and cysteine 456. Residues 542-545 (KDEL) carry the Prevents secretion from ER motif.

The protein belongs to the protein disulfide isomerase family.

It is found in the endoplasmic reticulum lumen. It catalyses the reaction Catalyzes the rearrangement of -S-S- bonds in proteins.. Acts as a protein-folding catalyst that interacts with nascent polypeptides to catalyze the formation, isomerization, and reduction or oxidation of disulfide bonds. May play a role in storage protein biogenesis. The chain is Protein disulfide isomerase-like 1-3 (PDIL1-3) from Oryza sativa subsp. japonica (Rice).